Consider the following 702-residue polypeptide: Nucleolar and coiled-body phosphoprotein 1 (702 aa).

In terms of domain architecture, LisH spans 10-42; the sequence is VPSDLYPLVLRFLRDSQLSEVASKFAKATGATQ. Lysine 33 carries the post-translational modification N6-acetyllysine. Positions 65–635 are disordered; the sequence is PKVKLQSNGP…SPFRRVREEE (571 aa). Residues lysine 68 and lysine 77 each participate in a glycyl lysine isopeptide (Lys-Gly) (interchain with G-Cter in SUMO2) cross-link. 2 Acidic serine cluster repeats span residues 85–96 and 130–141; these read SSDSSEDSSEDE and ESSSSEESSEEE. Residues 85–566 form an 11 X 12 AA approximate repeats of an acidic serine cluster region; the sequence is SSDSSEDSSE…GKAAKESEEE (482 aa). Phosphoserine is present on serine 88. Diphosphoserine occurs at positions 89 and 92. Phosphoserine; by CK2 occurs at positions 89 and 92. The residue at position 93 (serine 93) is a Phosphoserine. 2 stretches are compositionally biased toward low complexity: residues 123-135 and 151-164; these read KAAA…SSSE and QQKA…AVRP. A compositionally biased stretch (acidic residues) spans 172 to 188; that stretch reads SESDSDSDSDSSSEEET. One copy of the Acidic serine cluster 3 repeat lies at 176–187; it reads SDSDSDSSSEEE. 4 stretches are compositionally biased toward low complexity: residues 189–205, 224–235, 245–278, and 308–329; these read PQTQ…AQTK, KAAASSSSSSSS, AAPP…SSED, and LPKK…QPAD. Residues lysine 195 and lysine 201 each participate in a glycyl lysine isopeptide (Lys-Gly) (interchain with G-Cter in SUMO2) cross-link. Positions 215 to 390 are interaction with RPA194; it reads KAQPKVANGK…EDEAPAKPVS (176 aa). 2 Acidic serine cluster repeats span residues 232–241 and 273–284; these read SSSSDDSEEE and SSSSEDSSSEEE. A compositionally biased stretch (acidic residues) spans 330–342; the sequence is SSDDSSDDSDSSS. The Acidic serine cluster 6 repeat unit spans residues 334-345; the sequence is SSDDSDSSSEEE. Residues lysine 351 and lysine 356 each participate in a glycyl lysine isopeptide (Lys-Gly) (interchain with G-Cter in SUMO2) cross-link. Low complexity predominate over residues 353 to 362; sequence VVSKTPAKAA. Phosphoserine is present on residues serine 371, serine 372, and serine 375. The stretch at 372–383 is one Acidic serine cluster 7 repeat; it reads SDSSDSDSSEDE. Residues lysine 396, lysine 402, lysine 407, and lysine 413 each participate in a glycyl lysine isopeptide (Lys-Gly) (interchain with G-Cter in SUMO2) cross-link. Residues 411–422 are compositionally biased toward polar residues; that stretch reads TPKQPAGSNQKP. Lysine 421 carries the N6-acetyllysine; alternate modification. A Glycyl lysine isopeptide (Lys-Gly) (interchain with G-Cter in SUMO1); alternate cross-link involves residue lysine 421. A Glycyl lysine isopeptide (Lys-Gly) (interchain with G-Cter in SUMO2); alternate cross-link involves residue lysine 421. The stretch at 431 to 442 is one Acidic serine cluster 8 repeat; it reads SSEEESSSSEEE. Positions 431-443 are enriched in acidic residues; it reads SSEEESSSSEEEE. Glycyl lysine isopeptide (Lys-Gly) (interchain with G-Cter in SUMO2) cross-links involve residues lysine 447 and lysine 459. Composition is skewed to low complexity over residues 447 to 480 and 514 to 525; these read KSAT…SDSS and KSSSSSSSSSSE. Acidic serine cluster repeat units follow at residues 474–484 and 521–531; these read SSDSDSSSSEE and SSSSEDSSEEE. Residues 541-554 are compositionally biased toward polar residues; it reads PKIQASKANGTPAS. The Acidic serine cluster 11 repeat unit spans residues 555-566; sequence LNGKAAKESEEE. Serine 563 is subject to Phosphoserine. Acidic residues predominate over residues 563-572; the sequence is SEEEEEEEET. Lysine 575 participates in a covalent cross-link: Glycyl lysine isopeptide (Lys-Gly) (interchain with G-Cter in SUMO1). Lysine 582 participates in a covalent cross-link: Glycyl lysine isopeptide (Lys-Gly) (interchain with G-Cter in SUMO2). Position 585 is a phosphoserine (serine 585). Position 594 is a phosphothreonine (threonine 594). Lysine 607 is covalently cross-linked (Glycyl lysine isopeptide (Lys-Gly) (interchain with G-Cter in SUMO2)). Phosphothreonine occurs at positions 610 and 613. Lysine 616 is covalently cross-linked (Glycyl lysine isopeptide (Lys-Gly) (interchain with G-Cter in SUMO2)). 2 positions are modified to phosphoserine: serine 625 and serine 646. Residue lysine 650 forms a Glycyl lysine isopeptide (Lys-Gly) (interchain with G-Cter in SUMO2) linkage. An N6-acetyllysine; alternate modification is found at lysine 666. Lysine 666 participates in a covalent cross-link: Glycyl lysine isopeptide (Lys-Gly) (interchain with G-Cter in SUMO2); alternate. An Omega-N-methylarginine modification is found at arginine 686. Serine 689 carries the post-translational modification Phosphoserine. Lysine 698 participates in a covalent cross-link: Glycyl lysine isopeptide (Lys-Gly) (interchain with G-Cter in SUMO2). Serine 701 is modified (phosphoserine).

It belongs to the NOLC1 family. In terms of assembly, interacts with RNA polymerase I 194 kDa subunit (RPA194) and with casein kinase-II. Interacts with DKC1/NAP57, NOP58 and fibrillarin. Undergoes rapid and massive phosphorylation/dephosphorylation cycles on CK2 and PKC sites. NOLC1 is one of the mostly phosphorylated proteins in the cell. Post-translationally, pyrophosphorylated by 5-diphosphoinositol pentakisphosphate (5-IP7). Serine pyrophosphorylation is achieved by Mg(2+)-dependent, but enzyme independent transfer of a beta-phosphate from a inositol pyrophosphate to a pre-phosphorylated serine residue. In terms of processing, ubiquitinated. Monoubiquitination by the BCR(KBTBD8) complex promotes the formation of a NOLC1-TCOF1 complex that acts as a platform to connect RNA polymerase I with enzymes responsible for ribosomal processing and modification, leading to remodel the translational program of differentiating cells in favor of neural crest specification.

It localises to the nucleus. The protein resides in the nucleolus. Its subcellular location is the cytoplasm. In terms of biological role, nucleolar protein that acts as a regulator of RNA polymerase I by connecting RNA polymerase I with enzymes responsible for ribosomal processing and modification. Required for neural crest specification: following monoubiquitination by the BCR(KBTBD8) complex, associates with TCOF1 and acts as a platform to connect RNA polymerase I with enzymes responsible for ribosomal processing and modification, leading to remodel the translational program of differentiating cells in favor of neural crest specification. Involved in nucleologenesis, possibly by playing a role in the maintenance of the fundamental structure of the fibrillar center and dense fibrillar component in the nucleolus. It has intrinsic GTPase and ATPase activities. The sequence is that of Nucleolar and coiled-body phosphoprotein 1 from Mus musculus (Mouse).